The sequence spans 400 residues: Chaperone protein DnaJ (400 aa).

The 66-residue stretch at 4-69 (DYYETLGVTR…DKRRRYDQFG (66 aa)) folds into the J domain. The CR-type zinc finger occupies 156 to 237 (GVEKTLKVKR…CYGEGIKLGE (82 aa)). 8 residues coordinate Zn(2+): Cys-169, Cys-172, Cys-185, Cys-188, Cys-211, Cys-214, Cys-225, and Cys-228. CXXCXGXG motif repeat units lie at residues 169–176 (CEVCNGTG), 185–192 (CQTCHGSG), 211–218 (CPTCGGEG), and 225–232 (CTACYGEG).

The protein belongs to the DnaJ family. In terms of assembly, homodimer. Zn(2+) serves as cofactor.

It localises to the cytoplasm. Its function is as follows. Participates actively in the response to hyperosmotic and heat shock by preventing the aggregation of stress-denatured proteins and by disaggregating proteins, also in an autonomous, DnaK-independent fashion. Unfolded proteins bind initially to DnaJ; upon interaction with the DnaJ-bound protein, DnaK hydrolyzes its bound ATP, resulting in the formation of a stable complex. GrpE releases ADP from DnaK; ATP binding to DnaK triggers the release of the substrate protein, thus completing the reaction cycle. Several rounds of ATP-dependent interactions between DnaJ, DnaK and GrpE are required for fully efficient folding. Also involved, together with DnaK and GrpE, in the DNA replication of plasmids through activation of initiation proteins. This chain is Chaperone protein DnaJ, found in Chlorobium chlorochromatii (strain CaD3).